A 55-amino-acid polypeptide reads, in one-letter code: Cortexin domain containing 2 (55 aa).

A helical transmembrane segment spans residues 16–36 (FAIAFVVLLFLFLIVMIFRCA).

It is found in the membrane. The polypeptide is Cortexin domain containing 2 (Homo sapiens (Human)).